Consider the following 267-residue polypeptide: Regulatory protein RecX (267 aa).

This sequence belongs to the RecX family.

It localises to the cytoplasm. In terms of biological role, modulates RecA activity. This chain is Regulatory protein RecX, found in Staphylococcus carnosus (strain TM300).